The sequence spans 244 residues: 1-(5-phosphoribosyl)-5-[(5-phosphoribosylamino)methylideneamino] imidazole-4-carboxamide isomerase (244 aa).

The Proton acceptor role is filled by D10. The Proton donor role is filled by D132.

This sequence belongs to the HisA/HisF family.

It is found in the cytoplasm. It catalyses the reaction 1-(5-phospho-beta-D-ribosyl)-5-[(5-phospho-beta-D-ribosylamino)methylideneamino]imidazole-4-carboxamide = 5-[(5-phospho-1-deoxy-D-ribulos-1-ylimino)methylamino]-1-(5-phospho-beta-D-ribosyl)imidazole-4-carboxamide. It functions in the pathway amino-acid biosynthesis; L-histidine biosynthesis; L-histidine from 5-phospho-alpha-D-ribose 1-diphosphate: step 4/9. The protein is 1-(5-phosphoribosyl)-5-[(5-phosphoribosylamino)methylideneamino] imidazole-4-carboxamide isomerase of Xanthomonas campestris pv. campestris (strain 8004).